Consider the following 68-residue polypeptide: ATP synthase protein 8 (68 aa).

A helical membrane pass occupies residues 8–24; the sequence is VWPTIIMSMLLALFLLM. K54 is subject to N6-acetyllysine; alternate. The residue at position 54 (K54) is an N6-succinyllysine; alternate. Residue K57 is modified to N6-acetyllysine.

It belongs to the ATPase protein 8 family. As to quaternary structure, F-type ATPases have 2 components, CF(1) - the catalytic core - and CF(0) - the membrane proton channel. Component of an ATP synthase complex composed of ATP5PB, ATP5MC1, ATP5F1E, ATP5PD, ATP5ME, ATP5PF, ATP5MF, MT-ATP6, MT-ATP8, ATP5F1A, ATP5F1B, ATP5F1D, ATP5F1C, ATP5PO, ATP5MG, ATP5MK and ATP5MJ. Interacts with PRICKLE3.

Its subcellular location is the mitochondrion membrane. In terms of biological role, mitochondrial membrane ATP synthase (F(1)F(0) ATP synthase or Complex V) produces ATP from ADP in the presence of a proton gradient across the membrane which is generated by electron transport complexes of the respiratory chain. F-type ATPases consist of two structural domains, F(1) - containing the extramembraneous catalytic core and F(0) - containing the membrane proton channel, linked together by a central stalk and a peripheral stalk. During catalysis, ATP synthesis in the catalytic domain of F(1) is coupled via a rotary mechanism of the central stalk subunits to proton translocation. Part of the complex F(0) domain. Minor subunit located with subunit a in the membrane. This chain is ATP synthase protein 8 (MT-ATP8), found in Hylobates lar (Lar gibbon).